The sequence spans 770 residues: MKAKVVINLVKINKKIIPDKIYVYRLFNDPEEELQKEGYSIYRLAYENVGIVIDPENLIIATTKELEYEGEFIPEGEISFSELRNDYQSKLVLRLLKENGIGEYELSKLLRKFRKPKTFGDYKVIPSVEMSVIKHDEDFYLVIHIIHQIQSMKTLWELVNKDPKELEEFLMTHKENLMLKDIASPLKTVYKPCFEEYTKKPKLDHNQEIVKYWYNYHIERYWNTPEAKLEFYRKFGQVDLKQPAILAKFASKIKKNKNYKIYLLPQLVVPTYNAEQLESDVAKEILEYTKLMPEERKELLENILAEVDSDIIDKSLSEIEVEKIAQELENKIRVRDDKGNSVPISQLNVQKSQLLLWTNYSRKYPVILPYEVPEKFRKIREIPMFIILDSGLLADIQNFATNEFRELVKSMYYSLAKKYNSLAKKARSTNEIGLPFLDFRGKEKVITEDLNSDKGIIEVVEQVSSFMKGKELGLAFIAARNKLSSEKFEEIKRRLFNLNVISQVVNEDTLKNKRDKYDRNRLDLFVRHNLLFQVLSKLGVKYYVLDYRFNYDYIIGIDVAPMKRSEGYIGGSAVMFDSQGYIRKIVPIKIGEQRGESVDMNEFFKEMVDKFKEFNIKLDNKKILLLRDGRITNNEEEGLKYISEMFDIEVVTMDVIKNHPVRAFANMKMYFNLGGAIYLIPHKLKQAKGTPIPIKLAKKRIIKNGKVEKQSITRQDVLDIFILTRLNYGSISADMRLPAPVHYAHKFANAIRNEWKIKEEFLAEGFLYFV.

An N-terminal domain region spans residues 1-151 (MKAKVVINLV…VIHIIHQIQS (151 aa)). One can recognise a PAZ domain in the interval 154-272 (TLWELVNKDP…LLPQLVVPTY (119 aa)). The interval 276 to 361 (QLESDVAKEI…SQLLLWTNYS (86 aa)) is interdomain connector. A mid domain region spans residues 362–544 (RKYPVILPYE…LSKLGVKYYV (183 aa)). Positions 473 to 756 (GLAFIAARNK…FANAIRNEWK (284 aa)) constitute a Piwi domain. Catalysis depends on residues D558, E596, D628, and H745. Residue D558 coordinates Mn(2+). Mn(2+)-binding residues include D628, H745, and V770.

It belongs to the argonaute family. Long pAgo subfamily. Monomer. The cofactor is Mn(2+).

Inhibited at greater than 500 mM NaCl. A DNA-guided ssDNA endonuclease that may play a role in defense against invading mobile genetic elements. Uses short 5'-phospho-ssDNA sequences as guides (gDNA) to bind complementary target strands, resulting in cleavage of the target DNA (tDNA). Endonucleolytically cleaves DNA in short dsDNA (the gDNA indicates where to cleave on the tDNA). Efficient guide-dependent target DNA cleavage requires a minimal gDNA length of 15 nucleotides (nt) and works up to at least 31 nt. Overexpression decreases plasmid transformation efficiency. Has no appreciable activity with gRNA or on target RNA. Also has guide-independent activity on plasmid DNA called 'chopping'. The cleavage site is 10 nucleotides (nt) downstream of the target residue base-paired with the 5'-end of the gDNA, cleavage is insensitive to adenine methylation. DNA cleavage produces 5'-phosphomonoesters (as it can be ligated by T4 DNA ligase). In Pyrococcus furiosus (strain ATCC 43587 / DSM 3638 / JCM 8422 / Vc1), this protein is Protein argonaute.